A 147-amino-acid chain; its full sequence is uncharacterized protein (147 aa).

This is an uncharacterized protein from Aedes vexans (Inland floodwater mosquito).